Consider the following 378-residue polypeptide: tRNA (guanine(26)-N(2))-dimethyltransferase (378 aa).

A Trm1 methyltransferase domain is found at 4 to 374 (KEVTEGKVRI…KGYEEIIRCV (371 aa)). 5 residues coordinate S-adenosyl-L-methionine: Arg44, Arg69, Asp87, Asp114, and Ala115. Cys246, Cys249, Cys263, and Cys266 together coordinate Zn(2+).

The protein belongs to the class I-like SAM-binding methyltransferase superfamily. Trm1 family.

The enzyme catalyses guanosine(26) in tRNA + 2 S-adenosyl-L-methionine = N(2)-dimethylguanosine(26) in tRNA + 2 S-adenosyl-L-homocysteine + 2 H(+). Functionally, dimethylates a single guanine residue at position 26 of a number of tRNAs using S-adenosyl-L-methionine as donor of the methyl groups. This chain is tRNA (guanine(26)-N(2))-dimethyltransferase, found in Saccharolobus islandicus (strain M.14.25 / Kamchatka #1) (Sulfolobus islandicus).